Here is a 237-residue protein sequence, read N- to C-terminus: Large ribosomal subunit protein uL1 (237 aa).

It belongs to the universal ribosomal protein uL1 family. In terms of assembly, part of the 50S ribosomal subunit.

Its function is as follows. Binds directly to 23S rRNA. The L1 stalk is quite mobile in the ribosome, and is involved in E site tRNA release. Functionally, protein L1 is also a translational repressor protein, it controls the translation of the L11 operon by binding to its mRNA. The protein is Large ribosomal subunit protein uL1 of Rickettsia typhi (strain ATCC VR-144 / Wilmington).